Reading from the N-terminus, the 126-residue chain is NADH-quinone oxidoreductase subunit A (126 aa).

3 helical membrane-spanning segments follow: residues 11–31 (IAIQLMVTLGFISVTLLSSWL), 64–84 (FLVATLFVLFDVEVIFFYPWA), and 98–118 (EGFVKMLLFMTSLLIGFIYVI).

Belongs to the complex I subunit 3 family. NDH-1 is composed of 14 different subunits. Subunits NuoA, H, J, K, L, M, N constitute the membrane sector of the complex.

The protein localises to the cell inner membrane. It carries out the reaction a quinone + NADH + 5 H(+)(in) = a quinol + NAD(+) + 4 H(+)(out). Its function is as follows. NDH-1 shuttles electrons from NADH, via FMN and iron-sulfur (Fe-S) centers, to quinones in the respiratory chain. The immediate electron acceptor for the enzyme in this species is believed to be a menaquinone. Couples the redox reaction to proton translocation (for every two electrons transferred, four hydrogen ions are translocated across the cytoplasmic membrane), and thus conserves the redox energy in a proton gradient. The polypeptide is NADH-quinone oxidoreductase subunit A (Cytophaga hutchinsonii (strain ATCC 33406 / DSM 1761 / CIP 103989 / NBRC 15051 / NCIMB 9469 / D465)).